We begin with the raw amino-acid sequence, 113 residues long: Transmembrane protein 256 (113 aa).

Positions 1–29 (MAGVGAAFRRLGALSGAGALGLASYGAHG) are cleaved as a signal peptide. The Extracellular portion of the chain corresponds to 30 to 63 (AQFPDAYGKELFDKANKHHFLHSLALLGVPSCRK). K43 bears the N6-acetyllysine mark. Residues 64–84 (PVWAGLLLASGTTLFCTSFYY) traverse the membrane as a helical segment. The Cytoplasmic portion of the chain corresponds to 85-92 (QALSGDTS). A helical transmembrane segment spans residues 93–113 (IQTLGPVGGSLLILGWLALAF).

The protein belongs to the TMEM256 family.

The protein resides in the membrane. The chain is Transmembrane protein 256 (Tmem256) from Mus musculus (Mouse).